The sequence spans 206 residues: Small ribosomal subunit protein uS4 (206 aa).

Residues 96–161 (RRLDNVVYRM…QGRIQAALAL (66 aa)) enclose the S4 RNA-binding domain.

Belongs to the universal ribosomal protein uS4 family. In terms of assembly, part of the 30S ribosomal subunit. Contacts protein S5. The interaction surface between S4 and S5 is involved in control of translational fidelity.

In terms of biological role, one of the primary rRNA binding proteins, it binds directly to 16S rRNA where it nucleates assembly of the body of the 30S subunit. Its function is as follows. With S5 and S12 plays an important role in translational accuracy. This chain is Small ribosomal subunit protein uS4, found in Legionella pneumophila (strain Corby).